Consider the following 232-residue polypeptide: Izumo sperm-egg fusion protein 4 (232 aa).

The signal sequence occupies residues 1-15 (MALLLCLVCLTAALA). 2 N-linked (GlcNAc...) asparagine glycosylation sites follow: asparagine 24 and asparagine 219.

It belongs to the Izumo family. Detected in sperm.

It localises to the secreted. This chain is Izumo sperm-egg fusion protein 4 (IZUMO4), found in Homo sapiens (Human).